The chain runs to 60 residues: Large ribosomal subunit protein bL32 (60 aa).

The disordered stretch occupies residues 1–28 (MAVQQNKKSRSARDMRRSHDALEASTLS). Residues 11–22 (SARDMRRSHDAL) are compositionally biased toward basic and acidic residues.

The protein belongs to the bacterial ribosomal protein bL32 family.

The polypeptide is Large ribosomal subunit protein bL32 (Pseudomonas savastanoi pv. phaseolicola (strain 1448A / Race 6) (Pseudomonas syringae pv. phaseolicola (strain 1448A / Race 6))).